Consider the following 149-residue polypeptide: NPC intracellular cholesterol transporter 2 (149 aa).

Positions 1–19 are cleaved as a signal peptide; it reads MRFLAATILLLALVAASQA. 3 disulfide bridges follow: cysteine 27–cysteine 140, cysteine 42–cysteine 47, and cysteine 93–cysteine 99. N-linked (GlcNAc...) asparagine glycosylation is found at asparagine 58 and asparagine 69. N6-acetyllysine is present on lysine 116.

This sequence belongs to the NPC2 family. In terms of assembly, interacts with NPC1 (via the second lumenal domain) in a cholestrol-dependent manner. Interacts with NUS1/NgBR, the interaction stabilizes NCP2 and regulates cholesterol trafficking. Interacts with DHDDS. Interacts with NEDD4L (via C2 domain). Interacts with NPC1L1. N-glycosylated. As to expression, detected in liver and bile. Detected in epididymis (at protein level). Detected in caput epididymis, corpus epididymis, cauda epididymis and ovary.

The protein resides in the secreted. It is found in the endoplasmic reticulum. Its subcellular location is the lysosome. It carries out the reaction cholesterol(in) = cholesterol(out). Its function is as follows. Intracellular cholesterol transporter which acts in concert with NPC1 and plays an important role in the egress of cholesterol from the lysosomal compartment. Unesterified cholesterol that has been released from LDLs in the lumen of the late endosomes/lysosomes is transferred by NPC2 to the cholesterol-binding pocket in the N-terminal domain of NPC1. May bind and mobilize cholesterol that is associated with membranes. NPC2 binds cholesterol with a 1:1 stoichiometry. Can bind a variety of sterols, including lathosterol, desmosterol and the plant sterols stigmasterol and beta-sitosterol. The secreted form of NCP2 regulates biliary cholesterol secretion via stimulation of ABCG5/ABCG8-mediated cholesterol transport. This chain is NPC intracellular cholesterol transporter 2, found in Mus musculus (Mouse).